The following is a 384-amino-acid chain: Putative aminohydrolase MTH_994 (384 aa).

Zn(2+)-binding residues include His-60, His-62, His-207, and Asp-291.

It belongs to the metallo-dependent hydrolases superfamily. ATZ/TRZ family.

This is Putative aminohydrolase MTH_994 from Methanothermobacter thermautotrophicus (strain ATCC 29096 / DSM 1053 / JCM 10044 / NBRC 100330 / Delta H) (Methanobacterium thermoautotrophicum).